The following is a 235-amino-acid chain: Probable flavin-dependent thymidylate synthase (235 aa).

Residues 1 to 229 enclose the ThyX domain; sequence MKVQLIASTI…PNTYQDIPTE (229 aa). FAD contacts are provided by residues Ser-70 and 93-95; that span reads RHR. Residues 90–93, 103–105, and Arg-168 each bind dUMP; these read ELER and SQR. Residues 93–103 carry the ThyX motif motif; that stretch reads RHRHLSFSVVS. FAD is bound at residue 184–186; sequence NHR. Position 195 (Arg-195) interacts with dUMP. Catalysis depends on Arg-195, which acts as the Involved in ionization of N3 of dUMP, leading to its activation.

The protein belongs to the thymidylate synthase ThyX family. As to quaternary structure, homotetramer. It depends on FAD as a cofactor.

The catalysed reaction is dUMP + (6R)-5,10-methylene-5,6,7,8-tetrahydrofolate + NADPH + H(+) = dTMP + (6S)-5,6,7,8-tetrahydrofolate + NADP(+). Its pathway is pyrimidine metabolism; dTTP biosynthesis. In terms of biological role, catalyzes the reductive methylation of 2'-deoxyuridine-5'-monophosphate (dUMP) to 2'-deoxythymidine-5'-monophosphate (dTMP) while utilizing 5,10-methylenetetrahydrofolate (mTHF) as the methyl donor, and NADPH and FADH(2) as the reductant. This Mycobacterium (Mycobacteriophage D29) protein is Probable flavin-dependent thymidylate synthase (48).